We begin with the raw amino-acid sequence, 305 residues long: Homoserine O-acetyltransferase (305 aa).

The active-site Acyl-thioester intermediate is the Cys-142. The substrate site is built by Lys-163 and Ser-192. His-235 serves as the catalytic Proton acceptor. Residue Glu-237 is part of the active site. Arg-249 contributes to the substrate binding site.

It belongs to the MetA family.

The protein resides in the cytoplasm. It catalyses the reaction L-homoserine + acetyl-CoA = O-acetyl-L-homoserine + CoA. The protein operates within amino-acid biosynthesis; L-methionine biosynthesis via de novo pathway; O-acetyl-L-homoserine from L-homoserine: step 1/1. Its function is as follows. Transfers an acetyl group from acetyl-CoA to L-homoserine, forming acetyl-L-homoserine. In Hyphomonas neptunium (strain ATCC 15444), this protein is Homoserine O-acetyltransferase.